The sequence spans 409 residues: Elongation factor Tu (409 aa).

The region spanning 10–214 (KPHVNIGTIG…EVDAYIPEPE (205 aa)) is the tr-type G domain. The interval 19 to 26 (GHVDHGKT) is G1. Residue 19 to 26 (GHVDHGKT) coordinates GTP. Thr-26 is a binding site for Mg(2+). Residues 60 to 64 (GITIN) form a G2 region. The segment at 81–84 (DCPG) is G3. Residues 81–85 (DCPGH) and 136–139 (NKQD) contribute to the GTP site. A G4 region spans residues 136–139 (NKQD). The segment at 174–176 (SAL) is G5.

This sequence belongs to the TRAFAC class translation factor GTPase superfamily. Classic translation factor GTPase family. EF-Tu/EF-1A subfamily. Monomer.

It is found in the cytoplasm. It catalyses the reaction GTP + H2O = GDP + phosphate + H(+). Functionally, GTP hydrolase that promotes the GTP-dependent binding of aminoacyl-tRNA to the A-site of ribosomes during protein biosynthesis. The sequence is that of Elongation factor Tu from Rippkaea orientalis (strain PCC 8801 / RF-1) (Cyanothece sp. (strain PCC 8801)).